A 335-amino-acid polypeptide reads, in one-letter code: Glutamyl-tRNA reductase (335 aa).

Residues 60–63, S110, 115–117, and Q121 contribute to the substrate site; these read TCHR and ETE. The Nucleophile role is filled by C61. NADP(+) is bound at residue 189 to 194; the sequence is GYSEIN.

It belongs to the glutamyl-tRNA reductase family. Homodimer.

The catalysed reaction is (S)-4-amino-5-oxopentanoate + tRNA(Glu) + NADP(+) = L-glutamyl-tRNA(Glu) + NADPH + H(+). Its pathway is porphyrin-containing compound metabolism; protoporphyrin-IX biosynthesis; 5-aminolevulinate from L-glutamyl-tRNA(Glu): step 1/2. In terms of biological role, catalyzes the NADPH-dependent reduction of glutamyl-tRNA(Glu) to glutamate 1-semialdehyde (GSA). The sequence is that of Glutamyl-tRNA reductase from Chlamydia trachomatis serovar A (strain ATCC VR-571B / DSM 19440 / HAR-13).